The following is a 552-amino-acid chain: Hydroxylamine reductase (552 aa).

4 residues coordinate [2Fe-2S] cluster: cysteine 5, cysteine 8, cysteine 20, and cysteine 27. Residues histidine 251, glutamate 275, cysteine 319, cysteine 407, cysteine 435, cysteine 460, glutamate 494, and lysine 496 each coordinate hybrid [4Fe-2O-2S] cluster. The residue at position 407 (cysteine 407) is a Cysteine persulfide.

It belongs to the HCP family. [2Fe-2S] cluster is required as a cofactor. The cofactor is hybrid [4Fe-2O-2S] cluster.

The protein localises to the cytoplasm. It carries out the reaction A + NH4(+) + H2O = hydroxylamine + AH2 + H(+). Functionally, catalyzes the reduction of hydroxylamine to form NH(3) and H(2)O. This chain is Hydroxylamine reductase, found in Shigella boydii serotype 4 (strain Sb227).